The chain runs to 66 residues: MAKGKDVRITVILECTGCVRNGVNKVSTGISRYITEKNRHNTPNRLELRKFCPFCYKHTMHGEIKK.

It belongs to the bacterial ribosomal protein bL33 family.

It localises to the plastid. The protein localises to the chloroplast. This chain is Large ribosomal subunit protein bL33c, found in Daucus carota (Wild carrot).